Here is a 689-residue protein sequence, read N- to C-terminus: Glycine--tRNA ligase beta subunit (689 aa).

The protein belongs to the class-II aminoacyl-tRNA synthetase family. Tetramer of two alpha and two beta subunits.

It is found in the cytoplasm. It carries out the reaction tRNA(Gly) + glycine + ATP = glycyl-tRNA(Gly) + AMP + diphosphate. The chain is Glycine--tRNA ligase beta subunit from Actinobacillus succinogenes (strain ATCC 55618 / DSM 22257 / CCUG 43843 / 130Z).